The primary structure comprises 310 residues: Methionyl-tRNA formyltransferase (310 aa).

Ser-110–Pro-113 contributes to the (6S)-5,6,7,8-tetrahydrofolate binding site.

It belongs to the Fmt family.

The enzyme catalyses L-methionyl-tRNA(fMet) + (6R)-10-formyltetrahydrofolate = N-formyl-L-methionyl-tRNA(fMet) + (6S)-5,6,7,8-tetrahydrofolate + H(+). In terms of biological role, attaches a formyl group to the free amino group of methionyl-tRNA(fMet). The formyl group appears to play a dual role in the initiator identity of N-formylmethionyl-tRNA by promoting its recognition by IF2 and preventing the misappropriation of this tRNA by the elongation apparatus. This Streptomyces coelicolor (strain ATCC BAA-471 / A3(2) / M145) protein is Methionyl-tRNA formyltransferase.